Reading from the N-terminus, the 256-residue chain is Protein N-terminal and lysine N-methyltransferase EFM7 (256 aa).

Positions 1-26 (MSDTESLNDALGLFDEPEDFRPEKPK) are disordered. S-adenosyl-L-methionine contacts are provided by residues Trp64, 90 to 92 (GAA), Asp112, Trp145, and Ser168.

This sequence belongs to the class I-like SAM-binding methyltransferase superfamily. EFM7 family.

Its subcellular location is the cytoplasm. Its function is as follows. S-adenosyl-L-methionine-dependent protein methyltransferase that trimethylates the N-terminal glycine 'Gly-2' of elongation factor 1-alpha, before also catalyzing the mono- and dimethylation of 'Lys-3'. The protein is Protein N-terminal and lysine N-methyltransferase EFM7 of Candida glabrata (strain ATCC 2001 / BCRC 20586 / JCM 3761 / NBRC 0622 / NRRL Y-65 / CBS 138) (Yeast).